Consider the following 213-residue polypeptide: ER lumen protein-retaining receptor erd-2.2 (213 aa).

The Lumenal portion of the chain corresponds to 1–2 (MN). The helical transmembrane segment at 3 to 21 (IFRISADMSHLLAIIILLL) threads the bilayer. Residues 22–35 (KIWKSRSCSGISAR) lie on the Cytoplasmic side of the membrane. The chain crosses the membrane as a helical span at residues 36–53 (SQILFALVFTARYLDLFS). Over 54–61 (TYISLYNT) the chain is Lumenal. A helical membrane pass occupies residues 62–80 (TMKITFLAATYATVYLMFF). Over 81–96 (KFRSTYMRESDTFRVE) the chain is Cytoplasmic. Residues 97 to 110 (LLIVPAAILALLIN) form a helical membrane-spanning segment. At 111–117 (HDFAPFE) the chain is on the lumenal side. The chain crosses the membrane as a helical span at residues 118 to 137 (LLWTFSIYLEAVAILPQLFL). The Cytoplasmic portion of the chain corresponds to 138–149 (LQSTGSAEVITA). The helical transmembrane segment at 150 to 168 (HYLFALGSYRALYIFNWIY) threads the bilayer. The Lumenal segment spans residues 169–178 (RYYTEDYFDP). The chain crosses the membrane as a helical span at residues 179–199 (IVVVAGIVQTVLYADFFYLYV). The Cytoplasmic portion of the chain corresponds to 200 to 213 (TRVVQTRKGMELPI).

This sequence belongs to the ERD2 family.

The protein localises to the endoplasmic reticulum membrane. Its function is as follows. Required for the retention of luminal endoplasmic reticulum proteins. Determines the specificity of the luminal ER protein retention system. Also required for normal vesicular traffic through the Golgi. The protein is ER lumen protein-retaining receptor erd-2.2 of Caenorhabditis elegans.